Reading from the N-terminus, the 208-residue chain is Large ribosomal subunit protein uL3c (208 aa).

The tract at residues 129–165 is disordered; it reads TRGPMTHGSKNHREPGSIGQGSTPGKVHKGKKMAGRL.

The protein belongs to the universal ribosomal protein uL3 family. In terms of assembly, part of the 50S ribosomal subunit.

It localises to the plastid. It is found in the chloroplast. Its function is as follows. One of the primary rRNA binding proteins, it binds directly near the 3'-end of the 23S rRNA, where it nucleates assembly of the 50S subunit. The polypeptide is Large ribosomal subunit protein uL3c (rpl3) (Rhodomonas salina (Cryptomonas salina)).